We begin with the raw amino-acid sequence, 503 residues long: Glycerol kinase (503 aa).

Position 14 (T14) interacts with ADP. Residues T14, T15, and S16 each coordinate ATP. T14 contributes to the sn-glycerol 3-phosphate binding site. Position 18 (R18) interacts with ADP. The sn-glycerol 3-phosphate site is built by R84, E85, Y136, and D246. Glycerol contacts are provided by R84, E85, Y136, D246, and Q247. The ADP site is built by T268 and G311. ATP contacts are provided by T268, G311, Q315, and G412. The ADP site is built by G412 and N416.

Belongs to the FGGY kinase family.

The catalysed reaction is glycerol + ATP = sn-glycerol 3-phosphate + ADP + H(+). The protein operates within polyol metabolism; glycerol degradation via glycerol kinase pathway; sn-glycerol 3-phosphate from glycerol: step 1/1. Inhibited by fructose 1,6-bisphosphate (FBP). Functionally, key enzyme in the regulation of glycerol uptake and metabolism. Catalyzes the phosphorylation of glycerol to yield sn-glycerol 3-phosphate. This Haemophilus influenzae (strain PittGG) protein is Glycerol kinase.